A 508-amino-acid chain; its full sequence is Probable cytosol aminopeptidase (508 aa).

Residues Lys-276 and Asp-281 each contribute to the Mn(2+) site. Lys-288 is a catalytic residue. Positions 299, 358, and 360 each coordinate Mn(2+). Arg-362 is an active-site residue.

It belongs to the peptidase M17 family. The cofactor is Mn(2+).

The protein localises to the cytoplasm. It catalyses the reaction Release of an N-terminal amino acid, Xaa-|-Yaa-, in which Xaa is preferably Leu, but may be other amino acids including Pro although not Arg or Lys, and Yaa may be Pro. Amino acid amides and methyl esters are also readily hydrolyzed, but rates on arylamides are exceedingly low.. The catalysed reaction is Release of an N-terminal amino acid, preferentially leucine, but not glutamic or aspartic acids.. Presumably involved in the processing and regular turnover of intracellular proteins. Catalyzes the removal of unsubstituted N-terminal amino acids from various peptides. The sequence is that of Probable cytosol aminopeptidase from Chlorobium luteolum (strain DSM 273 / BCRC 81028 / 2530) (Pelodictyon luteolum).